Consider the following 112-residue polypeptide: Cell cycle protein GpsB (112 aa).

Residues 38-72 (IKDYEAFHKEFEQLKQQNARLKRELEEQKLAATQV) adopt a coiled-coil conformation.

It belongs to the GpsB family. As to quaternary structure, forms polymers through the coiled coil domains. Interacts with PBP1, MreC and EzrA.

It is found in the cytoplasm. Its function is as follows. Divisome component that associates with the complex late in its assembly, after the Z-ring is formed, and is dependent on DivIC and PBP2B for its recruitment to the divisome. Together with EzrA, is a key component of the system that regulates PBP1 localization during cell cycle progression. Its main role could be the removal of PBP1 from the cell pole after pole maturation is completed. Also contributes to the recruitment of PBP1 to the division complex. Not essential for septum formation. The sequence is that of Cell cycle protein GpsB from Bacillus anthracis (strain A0248).